Consider the following 644-residue polypeptide: Prolyl 3,4-dihydroxylase TPA1 (644 aa).

Residues 141-247 form the Fe2OG dioxygenase domain; it reads SKTDMSINTY…RLSIQGWYHI (107 aa). Fe cation is bound by residues His-159 and Asp-161. Tyr-173 is a binding site for 2-oxoglutarate. Fe cation is bound at residue His-227. Arg-238 lines the 2-oxoglutarate pocket. A Phosphoserine modification is found at Ser-607.

Belongs to the TPA1 family. In terms of assembly, monomer and homodimer. Interacts with FRK1, eRF1 (SUP1), eRF3 (SUP35) and polyadenylate-binding protein PAB1. Interacts with ETT1. Requires Fe(2+) as cofactor. L-ascorbate is required as a cofactor.

It localises to the nucleus. It catalyses the reaction [ribosomal protein uS12]-L-proline + 2-oxoglutarate + O2 = [ribosomal protein uS12]-(3S)-3-hydroxy-L-proline + succinate + CO2. The catalysed reaction is [ribosomal protein uS12]-(3S)-3-hydroxy-L-proline + 2-oxoglutarate + O2 = [ribosomal protein uS12]-(3S)-3,4-dihydroxy-L-proline + succinate + CO2. Prolyl 3,4-dihydroxylase that catalyzes 3,4-dihydroxylation of 'Pro-64' of small ribosomal subunit uS12 (RPS23A and RPS23B), thereby regulating protein translation termination efficiency. Part of a messenger ribonucleoprotein (mRNP) complex at the 3'-UTR of mRNAs. It associates specifically with components of the translation termination complex and is involved in both translation termination and in regulation of normal mRNA decay through translation termination-coupled poly(A) shortening. The chain is Prolyl 3,4-dihydroxylase TPA1 from Saccharomyces cerevisiae (strain ATCC 204508 / S288c) (Baker's yeast).